The following is a 386-amino-acid chain: Succinate--CoA ligase [ADP-forming] subunit beta (386 aa).

Residues 9–235 (KELFAKHDVP…REEEDPLESA (227 aa)) form the ATP-grasp domain. ATP is bound by residues K44, 51 to 53 (GRG), A93, and E98. The Mg(2+) site is built by N190 and D204. Substrate contacts are provided by residues N255 and 317-319 (GIT).

This sequence belongs to the succinate/malate CoA ligase beta subunit family. As to quaternary structure, heterotetramer of two alpha and two beta subunits. The cofactor is Mg(2+).

The enzyme catalyses succinate + ATP + CoA = succinyl-CoA + ADP + phosphate. It carries out the reaction GTP + succinate + CoA = succinyl-CoA + GDP + phosphate. It functions in the pathway carbohydrate metabolism; tricarboxylic acid cycle; succinate from succinyl-CoA (ligase route): step 1/1. Succinyl-CoA synthetase functions in the citric acid cycle (TCA), coupling the hydrolysis of succinyl-CoA to the synthesis of either ATP or GTP and thus represents the only step of substrate-level phosphorylation in the TCA. The beta subunit provides nucleotide specificity of the enzyme and binds the substrate succinate, while the binding sites for coenzyme A and phosphate are found in the alpha subunit. The polypeptide is Succinate--CoA ligase [ADP-forming] subunit beta (Nocardioides sp. (strain ATCC BAA-499 / JS614)).